Reading from the N-terminus, the 593-residue chain is Proline--tRNA ligase (593 aa).

Belongs to the class-II aminoacyl-tRNA synthetase family. ProS type 1 subfamily. In terms of assembly, homodimer.

It localises to the cytoplasm. The enzyme catalyses tRNA(Pro) + L-proline + ATP = L-prolyl-tRNA(Pro) + AMP + diphosphate. Functionally, catalyzes the attachment of proline to tRNA(Pro) in a two-step reaction: proline is first activated by ATP to form Pro-AMP and then transferred to the acceptor end of tRNA(Pro). As ProRS can inadvertently accommodate and process non-cognate amino acids such as alanine and cysteine, to avoid such errors it has two additional distinct editing activities against alanine. One activity is designated as 'pretransfer' editing and involves the tRNA(Pro)-independent hydrolysis of activated Ala-AMP. The other activity is designated 'posttransfer' editing and involves deacylation of mischarged Ala-tRNA(Pro). The misacylated Cys-tRNA(Pro) is not edited by ProRS. This Synechococcus sp. (strain CC9605) protein is Proline--tRNA ligase.